Consider the following 506-residue polypeptide: Sporulation kinase D (506 aa).

The next 2 helical transmembrane spans lie at 17 to 37 and 250 to 270; these read VKLYIILVVIPAIVISFFVYE and LVLPLSCIIVLLNILFILVLY. In terms of domain architecture, Histidine kinase spans 298–505; that stretch reads STAHEIRNPL…EVTITLPVSA (208 aa). The residue at position 301 (His301) is a Phosphohistidine; by autocatalysis.

As to quaternary structure, oligomerizes, probably forms homodimers; oligomerization is assisted by FloT. Interacts with FloT.

The protein localises to the cell membrane. It carries out the reaction ATP + protein L-histidine = ADP + protein N-phospho-L-histidine.. Functionally, phosphorylates the sporulation-regulatory protein spo0F and, to a minor extent, is responsible for heterogeneous expression of spo0A during logarithmical growth. Also phosphorylates spo0A under biofilm growth conditions. In Bacillus subtilis (strain 168), this protein is Sporulation kinase D (kinD).